A 258-amino-acid chain; its full sequence is NAD kinase (258 aa).

Aspartate 51 serves as the catalytic Proton acceptor. NAD(+)-binding positions include 51 to 52 (DG), arginine 56, 119 to 120 (ND), lysine 130, aspartate 149, 160 to 165 (TAYSLS), and alanine 184.

The protein belongs to the NAD kinase family. Requires a divalent metal cation as cofactor.

The protein localises to the cytoplasm. It catalyses the reaction NAD(+) + ATP = ADP + NADP(+) + H(+). Its function is as follows. Involved in the regulation of the intracellular balance of NAD and NADP, and is a key enzyme in the biosynthesis of NADP. Catalyzes specifically the phosphorylation on 2'-hydroxyl of the adenosine moiety of NAD to yield NADP. This Thermotoga neapolitana (strain ATCC 49049 / DSM 4359 / NBRC 107923 / NS-E) protein is NAD kinase.